We begin with the raw amino-acid sequence, 482 residues long: Ribulose bisphosphate carboxylase large chain (482 aa).

A propeptide spanning residues 1–2 (MS) is cleaved from the precursor. At P3 the chain carries N-acetylproline. An N6,N6,N6-trimethyllysine modification is found at K14. Substrate is bound by residues N123 and T173. The active-site Proton acceptor is the K175. K177 contacts substrate. Positions 201, 203, and 204 each coordinate Mg(2+). An N6-carboxylysine modification is found at K201. The Proton acceptor role is filled by H294. Residues R295, H327, and S379 each contribute to the substrate site.

It belongs to the RuBisCO large chain family. Type I subfamily. In terms of assembly, heterohexadecamer of 8 large chains and 8 small chains; disulfide-linked. The disulfide link is formed within the large subunit homodimers. The cofactor is Mg(2+). Post-translationally, the disulfide bond which can form in the large chain dimeric partners within the hexadecamer appears to be associated with oxidative stress and protein turnover.

It localises to the plastid. The protein localises to the chloroplast. It carries out the reaction 2 (2R)-3-phosphoglycerate + 2 H(+) = D-ribulose 1,5-bisphosphate + CO2 + H2O. The enzyme catalyses D-ribulose 1,5-bisphosphate + O2 = 2-phosphoglycolate + (2R)-3-phosphoglycerate + 2 H(+). RuBisCO catalyzes two reactions: the carboxylation of D-ribulose 1,5-bisphosphate, the primary event in carbon dioxide fixation, as well as the oxidative fragmentation of the pentose substrate in the photorespiration process. Both reactions occur simultaneously and in competition at the same active site. This is Ribulose bisphosphate carboxylase large chain from Stegnosperma halimifolium.